The sequence spans 306 residues: uncharacterized protein (306 aa).

The active-site Proton acceptor is Asp-204.

The protein belongs to the aminoglycoside phosphotransferase family.

This is an uncharacterized protein from Bacillus subtilis (strain 168).